We begin with the raw amino-acid sequence, 1285 residues long: Dermonecrotic toxin (1285 aa).

A helical membrane pass occupies residues 402–422; it reads MLVPAVGIPINFALSATALGL.

The protein localises to the cytoplasm. It is found in the secreted. Its subcellular location is the host membrane. Its function is as follows. This is a dermonecrotic toxin. This osteolytic toxin, induces bone resorption. Potent mitogen. This toxin is associated with the severe progressive form of the atrophic rhinitis, a major respiratory disease in pigs. In Pasteurella multocida, this protein is Dermonecrotic toxin (toxA).